Reading from the N-terminus, the 926-residue chain is Ubiquitin carboxyl-terminal hydrolase 4 (926 aa).

In terms of domain architecture, Rhodanese spans 205-328 (SQMEILLIDI…WLKSNYGRQV (124 aa)). The residue at position 443 (Ser-443) is a Phosphoserine. The USP domain occupies 562-923 (VGLENLGNSC…NAYVLFYHRV (362 aa)). Cys-571 functions as the Nucleophile in the catalytic mechanism. The active-site Proton acceptor is His-880.

The protein belongs to the peptidase C19 family. Interacts with BRO1, RFU1 and VPS32. Associates with the 26S proteasome.

The protein resides in the cytoplasm. It is found in the late endosome membrane. It carries out the reaction Thiol-dependent hydrolysis of ester, thioester, amide, peptide and isopeptide bonds formed by the C-terminal Gly of ubiquitin (a 76-residue protein attached to proteins as an intracellular targeting signal).. RFU1 is an inhibitor of deubiquitination activity. Ubiquitin thioesterase that acts at the late endosome/prevacuolar compartment to recover ubiquitin from ubiquitinated membrane proteins en route to the vacuole. Also removes ubiquitin from soluble proteins targeted to proteasomes. Is essential to maintain a normal level of free ubiquitin. Involved in the ammonium-induced down-regulation of the GAP1 permease and the UME3 destruction in response to oxidative stress. Has a role in the RAD9 checkpoint response to TOP1 poisons. Required for promoting coordination of DNA replication and avoids DNA overreplication. The chain is Ubiquitin carboxyl-terminal hydrolase 4 (DOA4) from Saccharomyces cerevisiae (strain RM11-1a) (Baker's yeast).